The primary structure comprises 118 residues: MFNKKQARLRRARKTRAKIAELKAVRLCVNRTNCHIYAQIISPCGGKVLASASTLDTDVRKDLANGGNKAAATTIGKLIAERAKAAGIEQVAFDRSGLQYHGRIQALAEAAREGGLKF.

The protein belongs to the universal ribosomal protein uL18 family. Part of the 50S ribosomal subunit; part of the 5S rRNA/L5/L18/L25 subcomplex. Contacts the 5S and 23S rRNAs.

This is one of the proteins that bind and probably mediate the attachment of the 5S RNA into the large ribosomal subunit, where it forms part of the central protuberance. This is Large ribosomal subunit protein uL18 from Dechloromonas aromatica (strain RCB).